A 299-amino-acid polypeptide reads, in one-letter code: Nucleotide-binding protein DIP1313 (299 aa).

22-29 (GLSGAGLS) is an ATP binding site. 73-76 (DVRS) serves as a coordination point for GTP.

This sequence belongs to the RapZ-like family.

Its function is as follows. Displays ATPase and GTPase activities. The protein is Nucleotide-binding protein DIP1313 of Corynebacterium diphtheriae (strain ATCC 700971 / NCTC 13129 / Biotype gravis).